Reading from the N-terminus, the 208-residue chain is 3-demethoxyubiquinol 3-hydroxylase (208 aa).

Residues Glu57, Glu87, His90, Glu139, Glu171, and His174 each contribute to the Fe cation site.

The protein belongs to the COQ7 family. Fe cation is required as a cofactor.

The protein localises to the cell membrane. The enzyme catalyses a 5-methoxy-2-methyl-3-(all-trans-polyprenyl)benzene-1,4-diol + AH2 + O2 = a 3-demethylubiquinol + A + H2O. Its pathway is cofactor biosynthesis; ubiquinone biosynthesis. Catalyzes the hydroxylation of 2-nonaprenyl-3-methyl-6-methoxy-1,4-benzoquinol during ubiquinone biosynthesis. This Burkholderia pseudomallei (strain 668) protein is 3-demethoxyubiquinol 3-hydroxylase.